Reading from the N-terminus, the 167-residue chain is Peptide deformylase (167 aa).

Fe cation is bound by residues C91 and H133. E134 is a catalytic residue. Residue H137 coordinates Fe cation.

Belongs to the polypeptide deformylase family. Requires Fe(2+) as cofactor.

It carries out the reaction N-terminal N-formyl-L-methionyl-[peptide] + H2O = N-terminal L-methionyl-[peptide] + formate. Removes the formyl group from the N-terminal Met of newly synthesized proteins. Requires at least a dipeptide for an efficient rate of reaction. N-terminal L-methionine is a prerequisite for activity but the enzyme has broad specificity at other positions. The sequence is that of Peptide deformylase from Nitrosococcus oceani (strain ATCC 19707 / BCRC 17464 / JCM 30415 / NCIMB 11848 / C-107).